The sequence spans 692 residues: Ribosome-releasing factor 2, mitochondrial (692 aa).

A mitochondrion-targeting transit peptide spans 1-29 (MLKYAWQSGPKQRNRWLWHLSNQIWKRSY). Residues 31 to 310 (SKIRNIGILA…AVNAYLPAPE (280 aa)) form the tr-type G domain. GTP contacts are provided by residues 40–47 (AHIDAGKT), 104–108 (DTPGH), and 158–161 (NKMD).

This sequence belongs to the TRAFAC class translation factor GTPase superfamily. Classic translation factor GTPase family. EF-G/EF-2 subfamily.

The protein resides in the mitochondrion. Its function is as follows. Mitochondrial GTPase that mediates the disassembly of ribosomes from messenger RNA at the termination of mitochondrial protein biosynthesis. Not involved in the GTP-dependent ribosomal translocation step during translation elongation. The chain is Ribosome-releasing factor 2, mitochondrial from Drosophila sechellia (Fruit fly).